The chain runs to 193 residues: Ribose 1,5-bisphosphate phosphokinase PhnN (193 aa).

Gly-9–Asp-16 serves as a coordination point for ATP.

This sequence belongs to the ribose 1,5-bisphosphokinase family.

The catalysed reaction is alpha-D-ribose 1,5-bisphosphate + ATP = 5-phospho-alpha-D-ribose 1-diphosphate + ADP. The protein operates within metabolic intermediate biosynthesis; 5-phospho-alpha-D-ribose 1-diphosphate biosynthesis; 5-phospho-alpha-D-ribose 1-diphosphate from D-ribose 5-phosphate (route II): step 3/3. Functionally, catalyzes the phosphorylation of ribose 1,5-bisphosphate to 5-phospho-D-ribosyl alpha-1-diphosphate (PRPP). This Yersinia pestis protein is Ribose 1,5-bisphosphate phosphokinase PhnN.